A 569-amino-acid chain; its full sequence is Urease subunit alpha (569 aa).

In terms of domain architecture, Urease spans 131–569 (GGIDTHIHFI…LPLAQRYLLL (439 aa)). The Ni(2+) site is built by His-136, His-138, and Lys-219. Lys-219 is modified (N6-carboxylysine). Residue His-221 coordinates substrate. Ni(2+) contacts are provided by His-248 and His-274. The active-site Proton donor is the His-322. Residue Asp-362 participates in Ni(2+) binding.

The protein belongs to the metallo-dependent hydrolases superfamily. Urease alpha subunit family. In terms of assembly, heterotrimer of UreA (gamma), UreB (beta) and UreC (alpha) subunits. Three heterotrimers associate to form the active enzyme. The cofactor is Ni cation. Post-translationally, carboxylation allows a single lysine to coordinate two nickel ions.

It localises to the cytoplasm. It carries out the reaction urea + 2 H2O + H(+) = hydrogencarbonate + 2 NH4(+). It functions in the pathway nitrogen metabolism; urea degradation; CO(2) and NH(3) from urea (urease route): step 1/1. This chain is Urease subunit alpha, found in Parasynechococcus marenigrum (strain WH8102).